We begin with the raw amino-acid sequence, 332 residues long: Endo-1,4-beta-xylanase B (332 aa).

The GH10 domain occupies 2 to 331 (STEIPSLSAS…KDSFWRIIGQ (330 aa)). E134 functions as the Proton donor in the catalytic mechanism. E241 acts as the Nucleophile in catalysis.

Belongs to the glycosyl hydrolase 10 (cellulase F) family. Cytoplasmic xylanase subfamily.

It localises to the cytoplasm. The enzyme catalyses Endohydrolysis of (1-&gt;4)-beta-D-xylosidic linkages in xylans.. It functions in the pathway glycan degradation; xylan degradation. With respect to regulation, completely inhibited by Ag(2+), Cu(2+), Hg(2+), Mn(2+), Pb(2+) and Sn(2+). Strongly inhibited by Fe(2+) and Zn(2+). Co(2+) and Ni(2+) cause little inhibition while Ca(2+) and Mg(2+) do not affect enzyme activity, and Ba(2+) produces a small stimulating effect. Irreversibly inactivated by SDS in vitro. Plays a role in plant xylan biodegradation, probably via the hydrolysis of short xylooligosaccharides resulting from extracellular xylan hydrolysis, once they have been transported inside cells. Shows similar activity on xylans of different rate of arabinose or methylglucuronic substitution. Also displays high activity on aryl-xylosides. Is active on xylotetraose and xylotriose, but does not hydrolyze xylobiose, indicating that XynB is a xylanase and not a beta-xylosidase. The sequence is that of Endo-1,4-beta-xylanase B (xynB) from Paenibacillus barcinonensis.